Reading from the N-terminus, the 443-residue chain is Ribosomal protein uS12 methylthiotransferase RimO (443 aa).

In terms of domain architecture, MTTase N-terminal spans 5–115; the sequence is PNIGFISLGC…VMKHVHKYVP (111 aa). [4Fe-4S] cluster contacts are provided by Cys-14, Cys-50, Cys-79, Cys-147, Cys-151, and Cys-154. A Radical SAM core domain is found at 133–374; that stretch reads LTPKHYAYLK…MQLQQKISAE (242 aa). Residues 377-443 enclose the TRAM domain; that stretch reads RQKIGRTLSV…ADEYDLWGEI (67 aa).

This sequence belongs to the methylthiotransferase family. RimO subfamily. The cofactor is [4Fe-4S] cluster.

It is found in the cytoplasm. It carries out the reaction L-aspartate(89)-[ribosomal protein uS12]-hydrogen + (sulfur carrier)-SH + AH2 + 2 S-adenosyl-L-methionine = 3-methylsulfanyl-L-aspartate(89)-[ribosomal protein uS12]-hydrogen + (sulfur carrier)-H + 5'-deoxyadenosine + L-methionine + A + S-adenosyl-L-homocysteine + 2 H(+). In terms of biological role, catalyzes the methylthiolation of an aspartic acid residue of ribosomal protein uS12. The sequence is that of Ribosomal protein uS12 methylthiotransferase RimO from Histophilus somni (strain 2336) (Haemophilus somnus).